Consider the following 700-residue polypeptide: Putative glutamine-dependent NAD(+) synthetase (700 aa).

Positions 5–275 (VTIASCQLNQ…VEVISATVDV (271 aa)) constitute a CN hydrolase domain. Glutamate 45 (proton acceptor; for glutaminase activity) is an active-site residue. Residue lysine 114 is the For glutaminase activity of the active site. Cysteine 175 functions as the Nucleophile; for glutaminase activity in the catalytic mechanism. A ligase region spans residues 327-700 (IPLPEEEITF…ASKFEQHQRK (374 aa)). 357 to 364 (PLSGGLDS) is a binding site for ATP. Serine 359 is an active-site residue.

In the C-terminal section; belongs to the NAD synthetase family.

It catalyses the reaction deamido-NAD(+) + L-glutamine + ATP + H2O = L-glutamate + AMP + diphosphate + NAD(+) + H(+). It functions in the pathway cofactor biosynthesis; NAD(+) biosynthesis; NAD(+) from deamido-NAD(+) (L-Gln route): step 1/1. The sequence is that of Putative glutamine-dependent NAD(+) synthetase from Schizosaccharomyces pombe (strain 972 / ATCC 24843) (Fission yeast).